The sequence spans 474 residues: Dihydrolipoyl dehydrogenase (474 aa).

Residues 36 to 45 (ERYNTLGGVC), Lys54, and Gly117 each bind FAD. A disulfide bridge links Cys45 with Cys50. NAD(+) is bound by residues 182–186 (GGGII) and Glu205. Lys220 bears the N6-acetyllysine mark. Residues Val238 and 270–273 (AIGR) each bind NAD(+). FAD is bound by residues Asp313 and Ala321. Residue His445 is the Proton acceptor of the active site.

This sequence belongs to the class-I pyridine nucleotide-disulfide oxidoreductase family. In terms of assembly, homodimer. The cofactor is FAD.

The protein localises to the cytoplasm. The catalysed reaction is N(6)-[(R)-dihydrolipoyl]-L-lysyl-[protein] + NAD(+) = N(6)-[(R)-lipoyl]-L-lysyl-[protein] + NADH + H(+). Its function is as follows. Lipoamide dehydrogenase is a component of the glycine cleavage system as well as of the alpha-ketoacid dehydrogenase complexes. This is Dihydrolipoyl dehydrogenase (lpdA) from Shigella flexneri.